The sequence spans 343 residues: Ribosomal RNA small subunit methyltransferase C (343 aa).

The protein belongs to the methyltransferase superfamily. RsmC family. Monomer.

It localises to the cytoplasm. The enzyme catalyses guanosine(1207) in 16S rRNA + S-adenosyl-L-methionine = N(2)-methylguanosine(1207) in 16S rRNA + S-adenosyl-L-homocysteine + H(+). In terms of biological role, specifically methylates the guanine in position 1207 of 16S rRNA in the 30S particle. In Shigella boydii serotype 4 (strain Sb227), this protein is Ribosomal RNA small subunit methyltransferase C.